Consider the following 757-residue polypeptide: Nitrogen fixation protein FixI (757 aa).

At 1-121 (MSCCASSAAI…GEEEGDDLLK (121 aa)) the chain is on the cytoplasmic side. The HMA domain maps to 37 to 107 (RQTELSVPNA…AIAERGYQTH (71 aa)). Positions 48 and 51 each coordinate a metal cation. A helical membrane pass occupies residues 122 to 143 (QLILAVAVSGFAATNIMLLSVS). The Extracellular segment spans residues 144 to 158 (VWSGADAATRDLFHW). The helical transmembrane segment at 159–178 (ISALIAGPALIYAGRFFYKS) threads the bilayer. Residues 179-185 (AWNAIRH) lie on the Cytoplasmic side of the membrane. A helical membrane pass occupies residues 186–206 (GRTNMDVPIALAVSLSYGMSL). Over 207–218 (HETIGHGEHAWF) the chain is Extracellular. A helical membrane pass occupies residues 219-239 (DASVTLLFFLLIGRTLDHMMR). At 240-368 (GRARTAISGL…RARYRRIADR (129 aa)) the chain is on the cytoplasmic side. A helical membrane pass occupies residues 369–391 (AARYYSPAVHLLALLTFVGWMLV). The Extracellular segment spans residues 392–398 (EGDVRHA). The helical transmembrane segment at 399–416 (MLVAVAVLIITCPCALGL) threads the bilayer. The Cytoplasmic portion of the chain corresponds to 417-688 (AVPVVQVVAA…ETSRHAGQLI (272 aa)). Asp454 serves as the catalytic 4-aspartylphosphate intermediate. Residues Asp634 and Asp638 each contribute to the Mg(2+) site. The chain crosses the membrane as a helical span at residues 689–708 (RQNFALAIGYNVIAVPIAIL). At 709–713 (GYATP) the chain is on the extracellular side. A helical transmembrane segment spans residues 714–732 (LVAAVAMSSSSLVVVFNAL). Topologically, residues 733-757 (RLKRSLAAGRGATPGTLIHSGAVTS) are cytoplasmic.

This sequence belongs to the cation transport ATPase (P-type) (TC 3.A.3) family. Type IB subfamily.

It localises to the cell membrane. The enzyme catalyses ATP + H2O = ADP + phosphate + H(+). Its function is as follows. FixI is a pump of a specific cation involved in symbiotic nitrogen fixation. The four proteins FixG, FixH, FixI, and FixS may participate in a membrane-bound complex coupling the FixI cation pump with a redox process catalyzed by FixG. The protein is Nitrogen fixation protein FixI (fixI) of Rhizobium meliloti (strain 1021) (Ensifer meliloti).